A 397-amino-acid polypeptide reads, in one-letter code: Acetate kinase (397 aa).

Asn8 contacts Mg(2+). Residue Lys15 coordinates ATP. Arg89 is a binding site for substrate. Asp146 (proton donor/acceptor) is an active-site residue. ATP contacts are provided by residues 206–210 (HLGNG), 281–283 (DLR), and 329–333 (GVGEN). Glu382 is a binding site for Mg(2+).

This sequence belongs to the acetokinase family. As to quaternary structure, homodimer. Mg(2+) is required as a cofactor. It depends on Mn(2+) as a cofactor.

The protein resides in the cytoplasm. It catalyses the reaction acetate + ATP = acetyl phosphate + ADP. It participates in metabolic intermediate biosynthesis; acetyl-CoA biosynthesis; acetyl-CoA from acetate: step 1/2. Its function is as follows. Catalyzes the formation of acetyl phosphate from acetate and ATP. Can also catalyze the reverse reaction. In Bacillus anthracis, this protein is Acetate kinase.